We begin with the raw amino-acid sequence, 266 residues long: uncharacterized protein (266 aa).

Residues 13-33 (IIGLMLIIFAGILFYAYILQH) traverse the membrane as a helical segment.

The protein belongs to the LicD transferase family.

It is found in the membrane. This is an uncharacterized protein from Rickettsia prowazekii (strain Madrid E).